Here is a 369-residue protein sequence, read N- to C-terminus: MPQTSTTQFFYLSALGIWGLWVYAFFNGMFDRLDTITRTLHFPDGRPLRSKYTNIGPLDAQLTLLSAFYDVLSNTLTSGPRLLFFDVNYVVACANLWVLIESRRRGVRSWFLKYPAWAMVLCNANGAAIVLPLYLYLVCCSKARLRDASVPKHEATALLVSTVVILLQPLLIFVPAWAGRGGSHLHHGCIALFQVAPIGVSVFHLGLASILPREASDSSPSSRKDSKKCIVASLVLAGTVAAAVHSYTVVGALITRDGQASLTRLFVPAHGFSDPIEVPLQPSGLPAEYMALVENLHLFSQWDWIVVALTSVLYSHLLLSLRDGAVRAKANHWVSPVEAQELVYLTVATIILGPGGAASFALAIRESRI.

The next 8 membrane-spanning stretches (helical) occupy residues 9-29 (FFYLSALGIWGLWVYAFFNGM), 82-102 (LLFFDVNYVVACANLWVLIES), 118-138 (AMVLCNANGAAIVLPLYLYLV), 157-177 (ALLVSTVVILLQPLLIFVPAW), 190-210 (IALFQVAPIGVSVFHLGLASI), 234-254 (LVLAGTVAAAVHSYTVVGALI), 298-318 (LFSQWDWIVVALTSVLYSHLL), and 342-362 (LVYLTVATIILGPGGAASFAL).

The protein belongs to the membrane-bound ascI terpene cyclase family.

It localises to the membrane. The protein operates within polyketide biosynthesis. Part of the gene cluster that mediates the biosynthesis of depudecin, a highly oxidized eleven-carbon linear polyketide that acts as a histone deacetylase (HDAC) inhibitor and makes a small contribution to pathogenesis. The reducing polyketide synthase DEP5 is the central enzyme in depudecin biosynthesis by yielding the backbone polyketide chain. The monooxygenases DEP2 and DEP4, as well as the uncharacterized protein DEP1, then act as tailoring enzymes to modify the intermediate polyketide chain into depudecin. The protein is Terpene cyclase DEP1 of Alternaria brassicicola (Dark leaf spot agent).